Reading from the N-terminus, the 567-residue chain is Organic cation transporter-like protein (567 aa).

Over 1 to 21 (MGYDEAIIHLGDFGRYQKIIY) the chain is Cytoplasmic. A helical transmembrane segment spans residues 22-42 (FLICLTSIPVAFHKLAGVFLL). At 43 to 127 (AKPDFRCALP…TEWNLVCGRD (85 aa)) the chain is on the extracellular side. N-linked (GlcNAc...) asparagine glycans are attached at residues Asn55, Asn67, Asn89, and Asn97. A helical transmembrane segment spans residues 128–148 (FMAATSDSLFMLGVLLGSIVF). Topologically, residues 149 to 158 (GQLSDKYGRK) are cytoplasmic. A helical transmembrane segment spans residues 159 to 179 (PILFASLVIQVLFGVLAGVAP). Residues 180 to 189 (EYFTYTFARL) are Extracellular-facing. Residues 190–210 (MVGATTSGVFLVAYVVAMEMV) form a helical membrane-spanning segment. The Cytoplasmic portion of the chain corresponds to 211 to 219 (GPDKRLYAG). Residues 220-240 (IFVMMFFSVGFMLTAVFAYFV) traverse the membrane as a helical segment. Topologically, residues 241 to 244 (HDWR) are extracellular. Residues 245–265 (WLQIALTLPGLIFMFYYWIIP) traverse the membrane as a helical segment. Over 266–343 (ESARWLLLKG…LFCYPNLRRK (78 aa)) the chain is Cytoplasmic. The disordered stretch occupies residues 304–326 (LDEGENSEEKAKQKLEDQELDEG). The segment covering 310 to 320 (SEEKAKQKLED) has biased composition (basic and acidic residues). A helical transmembrane segment spans residues 344–364 (TLLIFLDWLVTSGVYYGLSWN). Residues 365 to 371 (TSNLGGN) lie on the Extracellular side of the membrane. A helical transmembrane segment spans residues 372–392 (VLLNFVISGAVEIPAYIFLLL). The Cytoplasmic portion of the chain corresponds to 393-400 (TLNRWGRR). Residues 401–421 (SILCGCLVMAGLSLLATVIIP) traverse the membrane as a helical segment. The Extracellular portion of the chain corresponds to 422-427 (QRMHTL). The chain crosses the membrane as a helical span at residues 428 to 448 (IVACAMLGKLAITASYGTVYI). At 449–462 (FSAEQFPTVVRNVA) the chain is on the cytoplasmic side. Residues 463–483 (LGAASMVARISGMMAPFLNFL) form a helical membrane-spanning segment. At 484 to 489 (ATIWKP) the chain is on the extracellular side. The helical transmembrane segment at 490–510 (LPLLICGSLTLVAGLLSLLLP) threads the bilayer. Residues 511-567 (ETHNKPMLETIADGERFGKKTKADVYLETGQELRAPEAQPLKGSGETNGSTIANGHK) are Cytoplasmic-facing. The interval 546–567 (PEAQPLKGSGETNGSTIANGHK) is disordered. Over residues 555-567 (GETNGSTIANGHK) the composition is skewed to polar residues.

The protein belongs to the major facilitator (TC 2.A.1) superfamily. Organic cation transporter (TC 2.A.1.19) family.

It is found in the membrane. Probably transports organic cations. This Drosophila melanogaster (Fruit fly) protein is Organic cation transporter-like protein (Orct2).